The primary structure comprises 414 residues: Methylthioribose-1-phosphate isomerase (414 aa).

Positions 205 to 215 (SQSQGSENPPS) are enriched in polar residues. The interval 205–224 (SQSQGSENPPSKKQKKDAAP) is disordered. Aspartate 283 acts as the Proton donor in catalysis.

The protein belongs to the eIF-2B alpha/beta/delta subunits family. MtnA subfamily.

The protein localises to the cytoplasm. It is found in the nucleus. It catalyses the reaction 5-(methylsulfanyl)-alpha-D-ribose 1-phosphate = 5-(methylsulfanyl)-D-ribulose 1-phosphate. It functions in the pathway amino-acid biosynthesis; L-methionine biosynthesis via salvage pathway; L-methionine from S-methyl-5-thio-alpha-D-ribose 1-phosphate: step 1/6. In terms of biological role, catalyzes the interconversion of methylthioribose-1-phosphate (MTR-1-P) into methylthioribulose-1-phosphate (MTRu-1-P). The sequence is that of Methylthioribose-1-phosphate isomerase from Zygosaccharomyces rouxii (strain ATCC 2623 / CBS 732 / NBRC 1130 / NCYC 568 / NRRL Y-229).